A 501-amino-acid polypeptide reads, in one-letter code: WD repeat-containing protein wdr-5.3 (501 aa).

Disordered stretches follow at residues 1–35 (MNPE…LESN), 58–85 (PIGV…YQSH), and 155–197 (KSAE…ITKK). Residues 22-35 (PNQQSLQSRMLESN) are compositionally biased toward polar residues. The segment covering 167 to 177 (SITTKPTSTIQ) has biased composition (polar residues). 7 WD repeats span residues 211 to 241 (GHTK…KVWN), 253 to 283 (SHQL…KIFD), 295 to 325 (GHTN…RVWD), 337 to 367 (AHSD…RVWD), 381 to 410 (DHAP…KLWD), 422 to 455 (GHKN…LVWS), and 467 to 499 (GHTT…RIWR).

The protein belongs to the WD repeat WDR5/wds family.

Functionally, not required for methylation of histone H3 'Lys-4'. The sequence is that of WD repeat-containing protein wdr-5.3 (wdr-5.3) from Caenorhabditis elegans.